The chain runs to 450 residues: tRNA modification GTPase MnmE (450 aa).

(6S)-5-formyl-5,6,7,8-tetrahydrofolate-binding residues include R21, E80, and K119. The region spanning 213–373 (GIKVVIIGKP…LEEEIIKSVK (161 aa)) is the TrmE-type G domain. A K(+)-binding site is contributed by N223. GTP contacts are provided by residues 223 to 228 (NVGKST), 242 to 248 (TDIPGTT), and 267 to 270 (DTAG). Mg(2+) is bound at residue S227. Residues T242, I244, and T247 each coordinate K(+). A Mg(2+)-binding site is contributed by T248. Residue K450 coordinates (6S)-5-formyl-5,6,7,8-tetrahydrofolate.

It belongs to the TRAFAC class TrmE-Era-EngA-EngB-Septin-like GTPase superfamily. TrmE GTPase family. Homodimer. Heterotetramer of two MnmE and two MnmG subunits. It depends on K(+) as a cofactor.

It localises to the cytoplasm. Functionally, exhibits a very high intrinsic GTPase hydrolysis rate. Involved in the addition of a carboxymethylaminomethyl (cmnm) group at the wobble position (U34) of certain tRNAs, forming tRNA-cmnm(5)s(2)U34. The sequence is that of tRNA modification GTPase MnmE from Pseudothermotoga lettingae (strain ATCC BAA-301 / DSM 14385 / NBRC 107922 / TMO) (Thermotoga lettingae).